The following is a 360-amino-acid chain: MSTSKAITLTLFITTTLLASCDAAANATTKPLFPAILIFGDSTVDTGNNNYPLPTIFRAEHFPYGMDLPDGKANGRFSNGKLISDIIATKLNIKEFIPPFLQPNLSDQDILTGVCFASAGAGYDDLTSLSTQAIRVSEQPNMFKSYIARLKGIVGDKKAMEIINNAFVVVSAGPNDFILNYYDIPSRRLEYPFISGYQDFILKRLENFVRELYSLGVRNVLVGGLPPMGCLPIHMTAKFRNIFRFCLEHHNKDSVLYNEKLQKLLPQIEASLPGSKFLYADVYNPMMEMIQNPSKYGFKETKRGCCGTGFLETSFMCNVFSPVCQNRSEFMFFDSIHPSEATYNVIGNRLDPLIRGKFQA.

A signal peptide spans 1–27 (MSTSKAITLTLFITTTLLASCDAAANA). An N-linked (GlcNAc...) asparagine glycan is attached at Asn-26. Ser-42 functions as the Nucleophile in the catalytic mechanism. Residues Asn-104 and Asn-326 are each glycosylated (N-linked (GlcNAc...) asparagine). Catalysis depends on residues Asp-334 and His-337.

It belongs to the 'GDSL' lipolytic enzyme family.

It is found in the secreted. The chain is GDSL esterase/lipase At2g31550 from Arabidopsis thaliana (Mouse-ear cress).